A 130-amino-acid chain; its full sequence is Small ribosomal subunit protein uS11c (130 aa).

The protein belongs to the universal ribosomal protein uS11 family. Part of the 30S ribosomal subunit.

It localises to the plastid. The protein resides in the chloroplast. The sequence is that of Small ribosomal subunit protein uS11c from Porphyra purpurea (Red seaweed).